A 492-amino-acid chain; its full sequence is Vacuolar fusion protein CCZ1 homolog (492 aa).

The disordered stretch occupies residues 255–275 (SVHAGPTSSSSNGTASVERPL). Over residues 260–269 (PTSSSSNGTA) the composition is skewed to polar residues.

It belongs to the CCZ1 family. As to quaternary structure, interacts with MON1.

The protein resides in the endosome. It localises to the prevacuolar compartment. Its function is as follows. Plays an important role in membrane trafficking through the secretory apparatus. In complex with MON1, acts as a guanine exchange factor (GEF) for Rab7 protein family. Promotes the exchange of GDP to GTP, converting it from an inactive GDP-bound form into an active GTP-bound form. The active form is involved in protein trafficking from prevacuolar compartments (PVCs) to vacuoles. May serve as a linker between Rab5 and Rab7 protein families in PVCs and mediate PVC maturation. The protein is Vacuolar fusion protein CCZ1 homolog of Oryza sativa subsp. japonica (Rice).